A 444-amino-acid polypeptide reads, in one-letter code: Prenyltransferase phnF (444 aa).

This sequence belongs to the tryptophan dimethylallyltransferase family.

The enzyme catalyses 2,3,4,7,9-pentahydroxy-6-methyl-1H-phenalen-1-one + dimethylallyl diphosphate = 2,4,7,9-tetrahydroxy-6-methyl-8-(2-methylbut-3-en-2-yl)-1-oxo-1H-phenalen-3-ol + diphosphate. Its pathway is secondary metabolite biosynthesis. Functionally, prenyltransferase; part of the gene cluster that mediates the biosynthesis of phenalenones such as herqueinone, compounds that have been reported to treat tumors, bacterial infections and/or mycoses, and rheumatic diseases. The non-reducing polyketide synthase phnA synthesizes the heptaketide backbone and cyclizes it into the angular, hemiketal-containing naphtho-gamma-pyrone prephenalenone. The product template (PT) domain of phnA catalyzes only the C4-C9 aldol condensation, which is unprecedented among known PT domains. The transformation of prephenalenone to phenalenones requires an FAD-dependent monooxygenase phnB, which catalyzes the C2 aromatic hydroxylation of prephenalenone and ring opening of the gamma-pyrone ring simultaneously. Subsequent intramolecular deprotonation of C3 phenolic oxygen accelerates phenalenone ring closure to yield the tricyclic phenalenone core with a C2 hydroxylation. The prenyltransferase phnF further catalyzes reverse C-prenylation of phenalenone by direct electrophilic substitution at C6, or possibly via first a forward O-prenylation of a neighboring phenol in phenalenone, followed by a Claisen rearrangement. The hydroalkoxylation enzyme phnH catalyzes the 5-exo-trig cyclization via acid catalysis after the spontaneous deprotonation of 7-OH, which leads to the formation of the dihydrobenzofuran atrovenetin. Atrovenetin is further converted to deoxyherqueinone by the O-methyltransferase phnC which can methylate C2-OH to stabilize the northern portion of the phenalenone core. Finally, the oxidoreductase phnG converts deoxyherqueinone to herqueinone via C6 hydroxylation. This chain is Prenyltransferase phnF, found in Penicillium herquei.